The following is a 223-amino-acid chain: Probable transaldolase (223 aa).

Lys-86 acts as the Schiff-base intermediate with substrate in catalysis.

This sequence belongs to the transaldolase family. Type 3B subfamily.

The protein resides in the cytoplasm. The catalysed reaction is D-sedoheptulose 7-phosphate + D-glyceraldehyde 3-phosphate = D-erythrose 4-phosphate + beta-D-fructose 6-phosphate. It functions in the pathway carbohydrate degradation; pentose phosphate pathway; D-glyceraldehyde 3-phosphate and beta-D-fructose 6-phosphate from D-ribose 5-phosphate and D-xylulose 5-phosphate (non-oxidative stage): step 2/3. Functionally, transaldolase is important for the balance of metabolites in the pentose-phosphate pathway. The protein is Probable transaldolase (tal) of Thermoplasma acidophilum (strain ATCC 25905 / DSM 1728 / JCM 9062 / NBRC 15155 / AMRC-C165).